Reading from the N-terminus, the 473-residue chain is Photosystem II CP43 reaction center protein (473 aa).

Residues 1-14 (MKTLYSLRRFYPVE) constitute a propeptide that is removed on maturation. Residue T15 is modified to N-acetylthreonine. Position 15 is a phosphothreonine (T15). Helical transmembrane passes span 69-93 (LFEV…PHLA), 134-155 (LLGP…KDRN), 178-200 (KALS…RKIT), 255-275 (KPFA…LSYS), and 291-312 (WFNN…ASQA). E367 contributes to the [CaMn4O5] cluster binding site. The chain crosses the membrane as a helical span at residues 447–471 (RARAAAAGFEKGIDRDFEPVLSMTP).

This sequence belongs to the PsbB/PsbC family. PsbC subfamily. PSII is composed of 1 copy each of membrane proteins PsbA, PsbB, PsbC, PsbD, PsbE, PsbF, PsbH, PsbI, PsbJ, PsbK, PsbL, PsbM, PsbT, PsbX, PsbY, PsbZ, Psb30/Ycf12, at least 3 peripheral proteins of the oxygen-evolving complex and a large number of cofactors. It forms dimeric complexes. Binds multiple chlorophylls and provides some of the ligands for the Ca-4Mn-5O cluster of the oxygen-evolving complex. It may also provide a ligand for a Cl- that is required for oxygen evolution. PSII binds additional chlorophylls, carotenoids and specific lipids. is required as a cofactor.

The protein resides in the plastid. It localises to the chloroplast thylakoid membrane. In terms of biological role, one of the components of the core complex of photosystem II (PSII). It binds chlorophyll and helps catalyze the primary light-induced photochemical processes of PSII. PSII is a light-driven water:plastoquinone oxidoreductase, using light energy to abstract electrons from H(2)O, generating O(2) and a proton gradient subsequently used for ATP formation. This chain is Photosystem II CP43 reaction center protein, found in Pelargonium hortorum (Common geranium).